The chain runs to 592 residues: Salivary peroxidase/catechol oxidase (592 aa).

The first 21 residues, 1–21 (MWMFLKLLLFVCSSWWSCAQA), serve as a signal peptide directing secretion. C24 and C37 are disulfide-bonded. Residue N25 is glycosylated (N-linked (GlcNAc...) asparagine). H110 acts as the Proton acceptor in catalysis. Ca(2+) contacts are provided by D111, T187, F189, D191, and S193. A glycan (N-linked (GlcNAc...) asparagine) is linked at N230. The cysteines at positions 235 and 244 are disulfide-linked. Position 353 (H353) interacts with heme b. N366 is a glycosylation site (N-linked (GlcNAc...) asparagine). 2 disulfides stabilise this stretch: C452/C509 and C553/C580.

It belongs to the peroxidase family. XPO subfamily. In terms of tissue distribution, female salivary gland.

The protein resides in the secreted. The enzyme catalyses 2 catechol + O2 = 2 1,2-benzoquinone + 2 H2O. Functionally, inhibits noradrenaline-induced smooth muscle contraction in the host, probably due to the oxidation of noradrenaline, resulting in vasodilation. Exhibits peroxidase activity. The protein is Salivary peroxidase/catechol oxidase of Anopheles albimanus (New world malaria mosquito).